Reading from the N-terminus, the 46-residue chain is Esculentin-1SEb (46 aa).

A disulfide bond links Cys40 and Cys46.

In terms of tissue distribution, expressed by the skin glands.

It localises to the secreted. Functionally, mast cell degranulating peptide. Causes histamine release from rat peritoneal mast cells in vitro. Has antibacterial activity against the Gram-negative bacterium E.coli K12 and Gram-positive bacterium M.luteus NCT C2665. The chain is Esculentin-1SEb from Lithobates sevosus (Dusky gopher frog).